Reading from the N-terminus, the 394-residue chain is MAKAKFERTKPHVNIGTIGHVDHGKTSLTAAITIVLAKTGGAKATAYDQIDAAPEEKERGITISTAHVEYETKNRHYAHVDCPGHADYVKNMITGAAQMDGAILVVSAADGPMPQTREHILLAKQVGVPAMVVFLNKVDMVDDPDLLELVEMEVRELLSKYGFPGDEIPIIKGSALQALEGKPEGEKAINELMDAVDSYIPQPVRATDKLFLMPIEDVFSISGRGTVVTGRVESGIIKLGEEIEIVGLKDTQKTTCTGVEMFRKLLDEGQAGDNVGILLRGTKREEVERGQVLAKPGSIKPHDKFEAEVYVLSKEEGGRHTPFTNDYRPQFYFRTTDVTGTIKLPADKQMVMPGDNATFTVELIKPIAMQEGLKFSIREGGRTVGAGVVTKINN.

Positions 10 to 204 (KPHVNIGTIG…AVDSYIPQPV (195 aa)) constitute a tr-type G domain. The interval 19–26 (GHVDHGKT) is G1. Residue 19–26 (GHVDHGKT) coordinates GTP. Residue Thr-26 participates in Mg(2+) binding. The G2 stretch occupies residues 60-64 (GITIS). A G3 region spans residues 81–84 (DCPG). GTP contacts are provided by residues 81 to 85 (DCPGH) and 136 to 139 (NKVD). The G4 stretch occupies residues 136 to 139 (NKVD). Positions 174-176 (SAL) are G5.

The protein belongs to the TRAFAC class translation factor GTPase superfamily. Classic translation factor GTPase family. EF-Tu/EF-1A subfamily. As to quaternary structure, monomer.

It localises to the cytoplasm. The enzyme catalyses GTP + H2O = GDP + phosphate + H(+). Its function is as follows. GTP hydrolase that promotes the GTP-dependent binding of aminoacyl-tRNA to the A-site of ribosomes during protein biosynthesis. The protein is Elongation factor Tu of Rickettsia felis (strain ATCC VR-1525 / URRWXCal2) (Rickettsia azadi).